A 274-amino-acid polypeptide reads, in one-letter code: Protein YeeZ (274 aa).

An N-terminal signal peptide occupies residues methionine 1–glycine 24. ATP is bound at residue glycine 170–threonine 177.

The polypeptide is Protein YeeZ (yeeZ) (Escherichia coli O157:H7).